Here is a 286-residue protein sequence, read N- to C-terminus: Phosphatidylglycerol--prolipoprotein diacylglyceryl transferase (286 aa).

7 helical membrane-spanning segments follow: residues 24–44, 72–92, 104–124, 140–160, 190–210, 218–238, and 253–273; these read IGPLAVHWYGVGYIVGILFAW, FIVWAAIGVVLGGRTGYVLFY, IFAVWQGGMSFHGGLLGVILA, FDVVAAGVPVGLGLVRVANFI, LYEALLEGLVLFVVLRILTHS, RFVGGAFICGYGLSRIFVEFF, and WLTMGMILSTPMVLAGIWAMA. Arg-155 provides a ligand contact to a 1,2-diacyl-sn-glycero-3-phospho-(1'-sn-glycerol).

This sequence belongs to the Lgt family.

It is found in the cell inner membrane. It carries out the reaction L-cysteinyl-[prolipoprotein] + a 1,2-diacyl-sn-glycero-3-phospho-(1'-sn-glycerol) = an S-1,2-diacyl-sn-glyceryl-L-cysteinyl-[prolipoprotein] + sn-glycerol 1-phosphate + H(+). Its pathway is protein modification; lipoprotein biosynthesis (diacylglyceryl transfer). Functionally, catalyzes the transfer of the diacylglyceryl group from phosphatidylglycerol to the sulfhydryl group of the N-terminal cysteine of a prolipoprotein, the first step in the formation of mature lipoproteins. In Mesorhizobium japonicum (strain LMG 29417 / CECT 9101 / MAFF 303099) (Mesorhizobium loti (strain MAFF 303099)), this protein is Phosphatidylglycerol--prolipoprotein diacylglyceryl transferase.